The following is a 576-amino-acid chain: Aspartate--tRNA ligase (576 aa).

Glu-171 provides a ligand contact to L-aspartate. Positions 195–198 (QLFK) are aspartate. Residue Arg-217 participates in L-aspartate binding. ATP contacts are provided by residues 217–219 (RDE) and Gln-226. Position 450 (His-450) interacts with L-aspartate. Glu-484 provides a ligand contact to ATP. L-aspartate is bound at residue Arg-491. Position 536-539 (536-539 (GLDR)) interacts with ATP.

This sequence belongs to the class-II aminoacyl-tRNA synthetase family. Type 1 subfamily. As to quaternary structure, homodimer.

The protein localises to the cytoplasm. The enzyme catalyses tRNA(Asp) + L-aspartate + ATP = L-aspartyl-tRNA(Asp) + AMP + diphosphate. Catalyzes the attachment of L-aspartate to tRNA(Asp) in a two-step reaction: L-aspartate is first activated by ATP to form Asp-AMP and then transferred to the acceptor end of tRNA(Asp). In Buchnera aphidicola subsp. Baizongia pistaciae (strain Bp), this protein is Aspartate--tRNA ligase.